A 408-amino-acid chain; its full sequence is 2,3-bisphosphoglycerate-independent phosphoglycerate mutase 1 (408 aa).

The protein belongs to the BPG-independent phosphoglycerate mutase family. A-PGAM subfamily. In terms of assembly, monomer. Mn(2+) serves as cofactor.

It carries out the reaction (2R)-2-phosphoglycerate = (2R)-3-phosphoglycerate. The protein operates within carbohydrate degradation; glycolysis; pyruvate from D-glyceraldehyde 3-phosphate: step 3/5. Functionally, catalyzes the interconversion of 2-phosphoglycerate and 3-phosphoglycerate. The sequence is that of 2,3-bisphosphoglycerate-independent phosphoglycerate mutase 1 (apgM1) from Archaeoglobus fulgidus (strain ATCC 49558 / DSM 4304 / JCM 9628 / NBRC 100126 / VC-16).